We begin with the raw amino-acid sequence, 294 residues long: Nucleotide-binding protein Smlt1108 (294 aa).

G16 to S23 is a binding site for ATP. A GTP-binding site is contributed by D69–G72.

Belongs to the RapZ-like family.

Functionally, displays ATPase and GTPase activities. The polypeptide is Nucleotide-binding protein Smlt1108 (Stenotrophomonas maltophilia (strain K279a)).